A 3330-amino-acid polypeptide reads, in one-letter code: Laminin subunit alpha-3 (3330 aa).

Positions 1 to 31 (MAVALGRAPRSLPLLLTLLLLLLLRMSPSWS) are cleaved as a signal peptide. One can recognise a Laminin N-terminal domain in the interval 40–295 (SSRSLHPPYF…SIKDISVGGR (256 aa)). Asn-139 carries an N-linked (GlcNAc...) asparagine glycan. The tract at residues 295-725 (RCVCNGHAEA…NNYYFPDLHH (431 aa)) is domain V. 27 disulfides stabilise this stretch: Cys-296-Cys-305, Cys-298-Cys-316, Cys-318-Cys-327, Cys-330-Cys-350, Cys-353-Cys-362, Cys-355-Cys-387, Cys-390-Cys-399, Cys-402-Cys-420, Cys-423-Cys-433, Cys-425-Cys-440, Cys-442-Cys-451, Cys-454-Cys-464, Cys-488-Cys-500, Cys-490-Cys-506, Cys-508-Cys-517, Cys-520-Cys-530, Cys-533-Cys-545, Cys-535-Cys-552, Cys-554-Cys-563, Cys-566-Cys-583, Cys-628-Cys-642, Cys-630-Cys-649, Cys-651-Cys-660, Cys-663-Cys-678, Cys-681-Cys-693, Cys-683-Cys-700, and Cys-702-Cys-711. Laminin EGF-like domains lie at 296-350 (CVCN…HNEC), 353-420 (CNCH…LHGC), 423-464 (CSCD…FPFC), 488-530 (CDCN…FPIC), 533-576 (CQCS…FPYC), 582-625 (VCHP…PRGC), 628-678 (CQCH…YFGC), and 681-725 (CQCD…DLHH). The N-linked (GlcNAc...) asparagine glycan is linked to Asn-445. Residues 793–1262 (TEAISGRITL…VAFYHNGAIP (470 aa)) form a domain IV 1 (domain IV B) region. The segment at 1263–1462 (CECDPAGTAG…CFCFGVNTDC (200 aa)) is domain III B. Intrachain disulfides connect Cys-1309–Cys-1316, Cys-1311–Cys-1323, Cys-1325–Cys-1334, Cys-1337–Cys-1350, Cys-1353–Cys-1368, Cys-1355–Cys-1375, Cys-1377–Cys-1386, Cys-1389–Cys-1399, Cys-1402–Cys-1414, Cys-1404–Cys-1421, Cys-1423–Cys-1432, and Cys-1435–Cys-1450. Laminin EGF-like domains are found at residues 1309–1352 (CNCG…GCDV), 1353–1401 (CNCS…ECVP), and 1402–1452 (CSCN…GCTK). A glycan (N-linked (GlcNAc...) asparagine) is linked at Asn-1354. One can recognise a Laminin EGF-like 12; first part domain in the interval 1453–1462 (CFCFGVNTDC). The region spanning 1466–1650 (HKQRAKFVDM…SGPRAHLVEM (185 aa)) is the Laminin IV type A domain. One can recognise a Laminin EGF-like 12; second part domain in the interval 1651–1683 (CACPPDYTGDSCQGCRPGYYWDNKSLPVGRCVP). A domain III A region spans residues 1651–1818 (CACPPDYTGD…DGSPAEECDD (168 aa)). Asn-1673 carries N-linked (GlcNAc...) asparagine glycosylation. 8 disulfide bridges follow: Cys-1684/Cys-1693, Cys-1686/Cys-1700, Cys-1703/Cys-1712, Cys-1715/Cys-1728, Cys-1731/Cys-1743, Cys-1733/Cys-1752, Cys-1754/Cys-1763, and Cys-1766/Cys-1781. Laminin EGF-like domains follow at residues 1684–1730 (CNCN…SCRV) and 1731–1783 (CPCP…SCQP). The Laminin EGF-like 15; truncated domain maps to 1784–1818 (CNCNSNGQLGPCDPLTGDCVNQEPKDGSPAEECDD). A domain II and I region spans residues 1819–2385 (CDSCVMTLLN…ARDAANKVAI (567 aa)). Coiled-coil stretches lie at residues 1851-1980 (TGAL…LRSR), 2012-2057 (VENN…HENE), 2088-2165 (LLQT…GDEL), and 2211-2238 (KRAK…QQVS). Residue Asn-2159 is glycosylated (N-linked (GlcNAc...) asparagine). Asn-2261 carries an N-linked (GlcNAc...) asparagine glycan. The Cell attachment site motif lies at 2274–2276 (RGD). The stretch at 2318–2383 (SARREDFSKA…QQARDAANKV (66 aa)) forms a coiled coil. Asn-2332, Asn-2361, Asn-2498, Asn-2580, and Asn-2747 each carry an N-linked (GlcNAc...) asparagine glycan. 5 consecutive Laminin G-like domains span residues 2386-2587 (PMRF…VEPC), 2594-2756 (SDKN…TKKC), 2763-2923 (VRTA…LGGC), 2983-3147 (ALQF…VSPC), and 3154-3327 (KGIY…LNGC). 3 cysteine pairs are disulfide-bonded: Cys-2557–Cys-2587, Cys-2733–Cys-2756, and Cys-2891–Cys-2923. N-linked (GlcNAc...) asparagine glycosylation is present at Asn-3094. A disulfide bridge connects residues Cys-3124 and Cys-3147. N-linked (GlcNAc...) asparagine glycosylation occurs at Asn-3270. A disulfide bond links Cys-3299 and Cys-3327.

In terms of assembly, laminin is a complex glycoprotein, consisting of three different polypeptide chains (alpha, beta, gamma), which are bound to each other by disulfide bonds into a cross-shaped molecule comprising one long and three short arms with globules at each end. Alpha-3 is a subunit of laminin-5 (laminin-332 or epiligrin/kalinin/nicein), laminin-6 (laminin-311 or K-laminin) and laminin-7 (laminin-321 or KS-laminin). Basal membrane of the upper alimentary tract and urinary and nasal epithelia, salivary glands and teeth (both variants). Isoform A is predominantly expressed in skin, hair follicles and developing neurons of the trigeminal ganglion. Isoform B was found in bronchi, alveoli, stomach, intestinal crypts, whisker pads, CNS, telencephalic neuroectoderm, thalamus, Rathke pouch and periventricular subependymal germinal layer.

The protein resides in the secreted. Its subcellular location is the extracellular space. It is found in the extracellular matrix. The protein localises to the basement membrane. In terms of biological role, binding to cells via a high affinity receptor, laminin is thought to mediate the attachment, migration and organization of cells into tissues during embryonic development by interacting with other extracellular matrix components. Its function is as follows. Laminin-5 is thought to be involved in (1) cell adhesion via integrin alpha-3/beta-1 in focal adhesion and integrin alpha-6/beta-4 in hemidesmosomes, (2) signal transduction via tyrosine phosphorylation of pp125-FAK and p80, (3) differentiation of keratinocytes. In Mus musculus (Mouse), this protein is Laminin subunit alpha-3 (Lama3).